The chain runs to 721 residues: MIYEGKAITVKALESGIVELNFDLKGESVNKFNRLTLNELRQAVDAIKADASVKGVIVSSGKDVFIVGADITEFVDNFKLPEAELVAGNLQANRIFSDFEDLGVPTVVAINGIALGGGLEMCLAADYRVISSSARIGLPEVKLGLYPGFGGTVRLPRIIGADNAIEWIASGKESSAEDALKVGAVDAVVAPEKLQAAALDLIQRAISGEFDYKAKRQPKLDKLKLNAIEQMMAFETAKGFVAGQAGPNYPAPVEAIKTIQKAANFGRDKALEIEAAGFVKMAKTSAAQSLIGLFLNDQELKKKAKGYDAVAKDVKQAAVLGAGIMGGGIAYQSAVKGTPILMKDIREEAIQLGLNEASKLLGGRLEKGRLTAAKMAEALNAIRPTLSYGDFGNVDLVVEAVVENPKVKQAVLAEVEANVGEHTILASNTSTISISLLAKALKRPENFVGMHFFNPVHMMPLVEVIRGEKSSEEAVATTVAYARKMGKNPIVVNDCPGFLVNRVLFPYFGGFARLVSAGVDFVRIDKVMEKFGWPMGPAYLMDVVGIDTGHHGRDVMAEGFPDRMKDDRRSVVDALYEAKRLGQKNGKGFYAYETDKKGKPKKVNDPAVLDVLKPIVYEQREVSDEDIINWMMIPLCLETVRCLEDGIVETAAEADMGLIYGIGFPPFRGGALRYIDSIGVAEFVALADQYAELGALYQPTAKLREMASKGQSFFGQASSEE.

Residues 1–190 are enoyl-CoA hydratase/isomerase; it reads MIYEGKAITV…KVGAVDAVVA (190 aa). Residue aspartate 297 coordinates substrate. Residues 312–721 are 3-hydroxyacyl-CoA dehydrogenase; the sequence is KDVKQAAVLG…SFFGQASSEE (410 aa). NAD(+) is bound by residues methionine 325, aspartate 344, 401-403, lysine 408, and serine 430; that span reads VVE. Histidine 451 serves as the catalytic For 3-hydroxyacyl-CoA dehydrogenase activity. Asparagine 454 contacts NAD(+). Substrate is bound by residues asparagine 501 and tyrosine 660.

It in the N-terminal section; belongs to the enoyl-CoA hydratase/isomerase family. This sequence in the C-terminal section; belongs to the 3-hydroxyacyl-CoA dehydrogenase family. Heterotetramer of two alpha chains (FadB) and two beta chains (FadA).

It catalyses the reaction a (3S)-3-hydroxyacyl-CoA + NAD(+) = a 3-oxoacyl-CoA + NADH + H(+). The enzyme catalyses a (3S)-3-hydroxyacyl-CoA = a (2E)-enoyl-CoA + H2O. It carries out the reaction a 4-saturated-(3S)-3-hydroxyacyl-CoA = a (3E)-enoyl-CoA + H2O. The catalysed reaction is (3S)-3-hydroxybutanoyl-CoA = (3R)-3-hydroxybutanoyl-CoA. It catalyses the reaction a (3Z)-enoyl-CoA = a 4-saturated (2E)-enoyl-CoA. The enzyme catalyses a (3E)-enoyl-CoA = a 4-saturated (2E)-enoyl-CoA. It participates in lipid metabolism; fatty acid beta-oxidation. In terms of biological role, involved in the aerobic and anaerobic degradation of long-chain fatty acids via beta-oxidation cycle. Catalyzes the formation of 3-oxoacyl-CoA from enoyl-CoA via L-3-hydroxyacyl-CoA. It can also use D-3-hydroxyacyl-CoA and cis-3-enoyl-CoA as substrate. The chain is Fatty acid oxidation complex subunit alpha from Pseudomonas savastanoi pv. phaseolicola (strain 1448A / Race 6) (Pseudomonas syringae pv. phaseolicola (strain 1448A / Race 6)).